The chain runs to 141 residues: Large ribosomal subunit protein uL11 (141 aa).

Belongs to the universal ribosomal protein uL11 family. Part of the ribosomal stalk of the 50S ribosomal subunit. Interacts with L10 and the large rRNA to form the base of the stalk. L10 forms an elongated spine to which L12 dimers bind in a sequential fashion forming a multimeric L10(L12)X complex. In terms of processing, one or more lysine residues are methylated.

Forms part of the ribosomal stalk which helps the ribosome interact with GTP-bound translation factors. The polypeptide is Large ribosomal subunit protein uL11 (Ligilactobacillus salivarius (strain UCC118) (Lactobacillus salivarius)).